The following is a 446-amino-acid chain: Bifunctional protein GlmU (446 aa).

Residues 1–229 (MTEKPVALIV…EAETLGINTR (229 aa)) form a pyrophosphorylase region. UDP-N-acetyl-alpha-D-glucosamine is bound by residues 11–14 (LAAG), Lys-25, Gln-78, 83–84 (GT), 106–108 (YGD), Gly-141, Glu-155, Asn-170, and Asn-227. Mg(2+) is bound at residue Asp-108. Asn-227 is a binding site for Mg(2+). Positions 230 to 250 (AELAAAEAAFQVRARARALED) are linker. Residues 251–446 (GVTMTDPATV…MQALRQKKGN (196 aa)) form an N-acetyltransferase region. The UDP-N-acetyl-alpha-D-glucosamine site is built by Arg-316 and Lys-334. Catalysis depends on His-346, which acts as the Proton acceptor. Positions 349 and 360 each coordinate UDP-N-acetyl-alpha-D-glucosamine. Residues Ala-363, 369-370 (NY), Ser-388, Ser-406, and Arg-423 each bind acetyl-CoA.

This sequence in the N-terminal section; belongs to the N-acetylglucosamine-1-phosphate uridyltransferase family. In the C-terminal section; belongs to the transferase hexapeptide repeat family. As to quaternary structure, homotrimer. The cofactor is Mg(2+).

It is found in the cytoplasm. It catalyses the reaction alpha-D-glucosamine 1-phosphate + acetyl-CoA = N-acetyl-alpha-D-glucosamine 1-phosphate + CoA + H(+). The enzyme catalyses N-acetyl-alpha-D-glucosamine 1-phosphate + UTP + H(+) = UDP-N-acetyl-alpha-D-glucosamine + diphosphate. It participates in nucleotide-sugar biosynthesis; UDP-N-acetyl-alpha-D-glucosamine biosynthesis; N-acetyl-alpha-D-glucosamine 1-phosphate from alpha-D-glucosamine 6-phosphate (route II): step 2/2. The protein operates within nucleotide-sugar biosynthesis; UDP-N-acetyl-alpha-D-glucosamine biosynthesis; UDP-N-acetyl-alpha-D-glucosamine from N-acetyl-alpha-D-glucosamine 1-phosphate: step 1/1. It functions in the pathway bacterial outer membrane biogenesis; LPS lipid A biosynthesis. Its function is as follows. Catalyzes the last two sequential reactions in the de novo biosynthetic pathway for UDP-N-acetylglucosamine (UDP-GlcNAc). The C-terminal domain catalyzes the transfer of acetyl group from acetyl coenzyme A to glucosamine-1-phosphate (GlcN-1-P) to produce N-acetylglucosamine-1-phosphate (GlcNAc-1-P), which is converted into UDP-GlcNAc by the transfer of uridine 5-monophosphate (from uridine 5-triphosphate), a reaction catalyzed by the N-terminal domain. The polypeptide is Bifunctional protein GlmU (Paracoccus denitrificans (strain Pd 1222)).